An 89-amino-acid chain; its full sequence is Small ribosomal subunit protein bS20 (89 aa).

A compositionally biased stretch (basic and acidic residues) spans 1 to 11 (MANHKSAEKRN). The tract at residues 1–30 (MANHKSAEKRNRQNQVARLRNKSTRTAMKN) is disordered.

The protein belongs to the bacterial ribosomal protein bS20 family.

Binds directly to 16S ribosomal RNA. In Desulfotalea psychrophila (strain LSv54 / DSM 12343), this protein is Small ribosomal subunit protein bS20.